The chain runs to 51 residues: Insulin (51 aa).

3 disulfide bridges follow: Cys-7–Cys-37, Cys-19–Cys-50, and Cys-36–Cys-41.

The protein belongs to the insulin family. Heterodimer of a B chain and an A chain linked by two disulfide bonds.

It localises to the secreted. In terms of biological role, insulin decreases blood glucose concentration. It increases cell permeability to monosaccharides, amino acids and fatty acids. It accelerates glycolysis, the pentose phosphate cycle, and glycogen synthesis in liver. The sequence is that of Insulin (INS) from Ptyas dhumnades (Big-eyed ratsnake).